The sequence spans 180 residues: MVKPENNLNQKKTKIGILGGTFDPAHKGHLEISKQAKKILELKNIIWAITKQNPFKNTSKTDLKNRIKFAKKIIGKNNFIKVKFYEEKVLSNKTIDLINYLNKDKKFEIYFIMGADNLINFHKWYKWKSIIKKCNLLVFDRQGYKAKSLKSVTYNGVNKNRLSFINFKKVNISSSQLRKI.

It belongs to the NadD family.

The enzyme catalyses nicotinate beta-D-ribonucleotide + ATP + H(+) = deamido-NAD(+) + diphosphate. It functions in the pathway cofactor biosynthesis; NAD(+) biosynthesis; deamido-NAD(+) from nicotinate D-ribonucleotide: step 1/1. Catalyzes the reversible adenylation of nicotinate mononucleotide (NaMN) to nicotinic acid adenine dinucleotide (NaAD). In Pelagibacter ubique (strain HTCC1062), this protein is Probable nicotinate-nucleotide adenylyltransferase.